A 181-amino-acid chain; its full sequence is Probable cobalt-precorrin-6B C(15)-methyltransferase (decarboxylating) (181 aa).

S-adenosyl-L-methionine contacts are provided by residues Thr-16, 40–44, Asp-61, and Ala-89; that span reads GCGSG.

It belongs to the methyltransferase superfamily. Archaeal-type CbiT family.

It carries out the reaction Co-precorrin-6B + S-adenosyl-L-methionine = Co-precorrin-7 + S-adenosyl-L-homocysteine + CO2. Its pathway is cofactor biosynthesis; adenosylcobalamin biosynthesis; cob(II)yrinate a,c-diamide from sirohydrochlorin (anaerobic route): step 8/10. Its function is as follows. Catalyzes the methylation of C-15 in cobalt-precorrin-6B followed by the decarboxylation of C-12 to form cobalt-precorrin-7. The sequence is that of Probable cobalt-precorrin-6B C(15)-methyltransferase (decarboxylating) from Methanococcus maripaludis (strain DSM 14266 / JCM 13030 / NBRC 101832 / S2 / LL).